A 183-amino-acid polypeptide reads, in one-letter code: Ribosome-recycling factor (183 aa).

The protein belongs to the RRF family.

It is found in the cytoplasm. Responsible for the release of ribosomes from messenger RNA at the termination of protein biosynthesis. May increase the efficiency of translation by recycling ribosomes from one round of translation to another. In Afipia carboxidovorans (strain ATCC 49405 / DSM 1227 / KCTC 32145 / OM5) (Oligotropha carboxidovorans), this protein is Ribosome-recycling factor.